Consider the following 494-residue polypeptide: MLTSGLLLVAAVAFLSVLVLMSVWKQRKLSGKLPPGPTPLPFVGNFLQLNTEQMYNSLMKISQRYGPVFTIYLGSRRIVVLCGQETVKEALVDQAEEFSGRGEQATFDWLFKGYGIAFSSGERAKQLRRFSITTLRDFGVGKRGIEERIQEEAGFLIDSFRKTNGAFIDPTFYLSRTVSNVISSIVFGDRFDYEDKEFLSLLRMMLGSLQFTATSMGQVYEMFSSVMKHLPGPQQQAFKELQGLEDFITKKVEHNQRTLDPNSPRDFIDSFLIRMLEEKKNPNTEFYMKNLVLTTLNLFFAGTETVSTTLRYGFLLLMKYPDIEAKVHEEIDRVIGRNRQPKYEDRMKMPYTEAVIHEIQRFADLIPMGLARRVTKDTKFRDFLLPKGTEVFPMLGSVLKDPKFFSNPKDFNPKHFLDDKGQFKKSDAFVPFSIGKRYCFGEGLARMELFLFLTNIMQNFHFKSTQEPQDIDVSPRLVGFVTIPPTYTMSFLSR.

S131 bears the Phosphoserine mark. Residue K379 is modified to N6-acetyllysine. Heme is bound at residue C439.

The protein belongs to the cytochrome P450 family. Heme serves as cofactor. As to expression, kidney and lung. Expressed in liver, with a strong circadian rhythmicity. Circadian expression is regulated by DBP.

It is found in the endoplasmic reticulum membrane. The protein localises to the microsome membrane. The catalysed reaction is an organic molecule + reduced [NADPH--hemoprotein reductase] + O2 = an alcohol + oxidized [NADPH--hemoprotein reductase] + H2O + H(+). Highly active in the 15-alpha-hydroxylation of testosterone. Also active in the 15-alpha-hydroxylation of progesterone and androstenedione. Little or no activity on corticosterone, pregnenolone, dehydroepiandrosterone, estradiol or estriol. The chain is Cytochrome P450 2A4 (Cyp2a4) from Mus musculus (Mouse).